Here is a 1097-residue protein sequence, read N- to C-terminus: MNGLKREHESSSSQDGSKTPETEYDSHVDSIEDIHSLASKRKKLNEKKENLEDLTLLKTSAFELKLNELIREISVRGKYFRHANTFVEKIKDLIFKTPVIPETNFWSACKNLEKDKKVIVPLAEPLSAKDTNLRASFVPPKTVTPGIFSCSNKFFLNPDGWSYDLFLEIPESIFTQKDYLNGRYFRKRAFYLTCIAKHLLENLGNEVKLEFVAFNDDIRRPILAILPESKGFAATGKRFTVFLIPTVRQIFPVSKLLPHKNAIRDFMEHEELKPTPFYNNSVLEEQNLLFYRDLVKKYSVNPQFLDACGLGSTWLNMRGFSSSIHSNGFGLLEWYVLMALLMSSTGLPAGNVLNTYLTAAQFFKSMLQFLSSKNLTSTLFKLNADSSNLKIGNGHLPTLIDCNTGFNLLGKMKQSFFEYFQASCRHTLNLLDENANYNFSKIFITHVNVPALEFDVSGCIPLEPKELEDPNFCRKTDLDSPYSLYLEYTWDLLQHALGDRVCQIILYSSICTSCSINESLKTKLPKLISFGLLLNPDALLRLVDIGPSPDDTVGSQKFREFWGEVSELRKFKNGSIAESVYWECSSPDERIRIPQRIIRHILNRHLGNNVGDRVSFRNEKFRVYVHSKISPNTDTYNEYVPVMEAYNEAVKSLINLSDIPLSIAEILPADESLRYSSSSVPFYESSTCAPIDVVFQFESSSKWPDELEGIQRTKIAFLLKIAELLEALDNVERASVGLENTDNPTHNCCFLQVLFSNNFTFRYRLRNDREIFFWKSLERNPSTKLSAQKGLYAYEHMFQFIPRHTLAIQAICQAHRSYSMAVRLAKHWFYSHLLTDHVTDEVIELLVASVYINSSSWRTTSSGETSFCRMLHFLAHWDWRFDPLIINSNGKLPHDVRHQATEKLESIRKQDVAIAHNAYYIITDYDFDGNHIGYYKPSKIIANRITSLARASLSELLKDTPNYKSIFKSSLDIYHVVIDVNINKLPMYRESNLTKYKNLQNMSSERPGFEPITEFVKELHRCFEDTISFFYNKKNPKVVTGVFNPRILANRPYRTNIDYPFKVVDKDTVVLDADVVCEEIRQVGGDLIRSIQLQLKA.

Basic and acidic residues-rich tracts occupy residues 1–10 and 18–27; these read MNGLKREHES and KTPETEYDSH. The segment at 1–27 is disordered; sequence MNGLKREHESSSSQDGSKTPETEYDSH.

Belongs to the NRAP family. Component of the ribosomal small subunit (SSU) processome.

It is found in the nucleus. Its subcellular location is the nucleolus. In terms of biological role, involved in nucleolar processing of pre-18S ribosomal RNA and ribosome assembly. The polypeptide is U3 small nucleolar RNA-associated protein 22 (Schizosaccharomyces pombe (strain 972 / ATCC 24843) (Fission yeast)).